The chain runs to 184 residues: Protein GrpE (184 aa).

A disordered region spans residues 1 to 35; the sequence is MTQENQNPPPEQEDVAADPQVNEAAASEPAAVKTP.

It belongs to the GrpE family. In terms of assembly, homodimer.

It is found in the cytoplasm. Functionally, participates actively in the response to hyperosmotic and heat shock by preventing the aggregation of stress-denatured proteins, in association with DnaK and GrpE. It is the nucleotide exchange factor for DnaK and may function as a thermosensor. Unfolded proteins bind initially to DnaJ; upon interaction with the DnaJ-bound protein, DnaK hydrolyzes its bound ATP, resulting in the formation of a stable complex. GrpE releases ADP from DnaK; ATP binding to DnaK triggers the release of the substrate protein, thus completing the reaction cycle. Several rounds of ATP-dependent interactions between DnaJ, DnaK and GrpE are required for fully efficient folding. This chain is Protein GrpE, found in Polynucleobacter asymbioticus (strain DSM 18221 / CIP 109841 / QLW-P1DMWA-1) (Polynucleobacter necessarius subsp. asymbioticus).